The chain runs to 187 residues: Phosphatidylethanolamine-binding protein 2 (187 aa).

Phosphoserine is present on residues Ser13, Ser52, and Ser54.

The protein belongs to the phosphatidylethanolamine-binding protein family. In terms of tissue distribution, testis specific.

It localises to the cytoplasm. In terms of biological role, may bind to phospholipids. May act as serine protease inhibitor. The polypeptide is Phosphatidylethanolamine-binding protein 2 (Pbp2) (Mus musculus (Mouse)).